The primary structure comprises 326 residues: MMTAEVTAADAEVLLAQPRGFCAGVDRAIDIVERALELHGAPIYVRHEIVHNRYVVEDLRGKGAVFIDELDQAPAGAIVVFSAHGVSQAVRGEAEARGLRVFDATCPLVTKVHIEVARMRAAGREIVMIGHKGHPEVEGTLGQAQGGMYLVETVEDVAALRVSDPGNLAYVTQTTLSVDDAAAVAGALKARFPGIVEPKKSDICYATQNRQDAVKLLAPECDLVLVVGSTNSSNSNRLREVAERKGVAAYLIDGAHAIDPAWLQGRRSIGITAGASAPEVLVQQVVERVRELGAVSVRTMPGLEESVAFPLPKGLSRKIAQTESLE.

C22 serves as a coordination point for [4Fe-4S] cluster. 2 residues coordinate (2E)-4-hydroxy-3-methylbut-2-enyl diphosphate: H51 and H84. Positions 51 and 84 each coordinate dimethylallyl diphosphate. Isopentenyl diphosphate contacts are provided by H51 and H84. Residue C106 participates in [4Fe-4S] cluster binding. A (2E)-4-hydroxy-3-methylbut-2-enyl diphosphate-binding site is contributed by H134. H134 serves as a coordination point for dimethylallyl diphosphate. H134 lines the isopentenyl diphosphate pocket. Residue E136 is the Proton donor of the active site. T174 contacts (2E)-4-hydroxy-3-methylbut-2-enyl diphosphate. C204 contacts [4Fe-4S] cluster. Residues S232, S233, N234, and S276 each coordinate (2E)-4-hydroxy-3-methylbut-2-enyl diphosphate. Dimethylallyl diphosphate contacts are provided by S232, S233, N234, and S276. Residues S232, S233, N234, and S276 each contribute to the isopentenyl diphosphate site.

This sequence belongs to the IspH family. [4Fe-4S] cluster is required as a cofactor.

The catalysed reaction is isopentenyl diphosphate + 2 oxidized [2Fe-2S]-[ferredoxin] + H2O = (2E)-4-hydroxy-3-methylbut-2-enyl diphosphate + 2 reduced [2Fe-2S]-[ferredoxin] + 2 H(+). It catalyses the reaction dimethylallyl diphosphate + 2 oxidized [2Fe-2S]-[ferredoxin] + H2O = (2E)-4-hydroxy-3-methylbut-2-enyl diphosphate + 2 reduced [2Fe-2S]-[ferredoxin] + 2 H(+). It functions in the pathway isoprenoid biosynthesis; dimethylallyl diphosphate biosynthesis; dimethylallyl diphosphate from (2E)-4-hydroxy-3-methylbutenyl diphosphate: step 1/1. The protein operates within isoprenoid biosynthesis; isopentenyl diphosphate biosynthesis via DXP pathway; isopentenyl diphosphate from 1-deoxy-D-xylulose 5-phosphate: step 6/6. Its function is as follows. Catalyzes the conversion of 1-hydroxy-2-methyl-2-(E)-butenyl 4-diphosphate (HMBPP) into a mixture of isopentenyl diphosphate (IPP) and dimethylallyl diphosphate (DMAPP). Acts in the terminal step of the DOXP/MEP pathway for isoprenoid precursor biosynthesis. This is 4-hydroxy-3-methylbut-2-enyl diphosphate reductase from Bordetella bronchiseptica (strain ATCC BAA-588 / NCTC 13252 / RB50) (Alcaligenes bronchisepticus).